A 546-amino-acid chain; its full sequence is Chaperonin GroEL 2 (546 aa).

ATP-binding positions include 30–33 (TLGP), lysine 51, 87–91 (DGTTT), glycine 415, and aspartate 495. Residues 527-546 (DAAPATAPGGPGAGGPGFDF) are disordered. Positions 535-546 (GGPGAGGPGFDF) are enriched in gly residues.

It belongs to the chaperonin (HSP60) family. As to quaternary structure, forms a cylinder of 14 subunits composed of two heptameric rings stacked back-to-back. Interacts with the co-chaperonin GroES.

It is found in the cytoplasm. The enzyme catalyses ATP + H2O + a folded polypeptide = ADP + phosphate + an unfolded polypeptide.. Its function is as follows. Together with its co-chaperonin GroES, plays an essential role in assisting protein folding. The GroEL-GroES system forms a nano-cage that allows encapsulation of the non-native substrate proteins and provides a physical environment optimized to promote and accelerate protein folding. The chain is Chaperonin GroEL 2 from Burkholderia ambifaria (strain ATCC BAA-244 / DSM 16087 / CCUG 44356 / LMG 19182 / AMMD) (Burkholderia cepacia (strain AMMD)).